A 369-amino-acid polypeptide reads, in one-letter code: Glutamate 5-kinase (369 aa).

Residue Lys-9 participates in ATP binding. Residues Ser-49, Asp-136, and Asn-148 each coordinate substrate. Residues 168–169 (TD) and 210–216 (TGGMLTK) each bind ATP. Residues 275 to 355 (QGSIWVDKGA…KGVLIYRDDW (81 aa)) enclose the PUA domain.

Belongs to the glutamate 5-kinase family.

It localises to the cytoplasm. It catalyses the reaction L-glutamate + ATP = L-glutamyl 5-phosphate + ADP. The protein operates within amino-acid biosynthesis; L-proline biosynthesis; L-glutamate 5-semialdehyde from L-glutamate: step 1/2. In terms of biological role, catalyzes the transfer of a phosphate group to glutamate to form L-glutamate 5-phosphate. This is Glutamate 5-kinase from Streptococcus pneumoniae (strain ATCC 700669 / Spain 23F-1).